The chain runs to 1428 residues: Gag-Pol polyprotein (1428 aa).

Residue Gly-2 is the site of N-myristoyl glycine; by host attachment. Positions 7-31 (VLSGKKLDSWEKIRLRPGGNKKYRL) are interaction with Gp41. Residues 8 to 43 (LSGKKLDSWEKIRLRPGGNKKYRLKHLVWASRELEK) form an interaction with host CALM1 region. The tract at residues 12-19 (KLDSWEKI) is interaction with host AP3D1. An interaction with membrane phosphatidylinositol 4,5-bisphosphate and RNA region spans residues 14-33 (DSWEKIRLRPGGNKKYRLKH). Positions 16-22 (WEKIRLR) match the Nuclear export signal motif. The Nuclear localization signal signature appears at 26–32 (NKKYRLK). The segment at 73 to 77 (EELRS) is interaction with membrane phosphatidylinositol 4,5-bisphosphate. Residues 108 to 130 (QNKNKQRTQQAAANTGSSQNYPI) are disordered. Residues 114-130 (RTQQAAANTGSSQNYPI) show a composition bias toward polar residues. Position 128 is a phosphotyrosine; by host (Tyr-128). An interaction with human PPIA/CYPA and NUP153 region spans residues 185 to 223 (NVVGGHQAAMQMLKDTINEEAAEWDRLHPVHAGPIPPGQ). The segment at 273 to 359 (YSPVSILDIR…GGPGHKARVL (87 aa)) is dimerization/Multimerization of capsid protein p24. 2 consecutive CCHC-type zinc fingers follow at residues 384–401 (IKCF…NCRA) and 405–422 (KGCW…DCTE). Residues 438-475 (EAREFSSEQTRANSPTSRNLWDGGKDDLPCETGAERQG) form a disordered region. Over residues 444-456 (SEQTRANSPTSRN) the composition is skewed to polar residues. Residues 460–475 (GGKDDLPCETGAERQG) are compositionally biased toward basic and acidic residues. The interval 482–486 (PQITL) is dimerization of protease. The Peptidase A2 domain maps to 501–570 (IEALLDTGAD…TPVNIIGRNM (70 aa)). Residue Asp-506 is the For protease activity; shared with dimeric partner of the active site. Dimerization of protease stretches follow at residues 530-536 (GIGGFIK) and 569-581 (NMLT…LNFP). The region spanning 624 to 814 (EGKISKIGPE…PPFLWMGYEL (191 aa)) is the Reverse transcriptase domain. Asp-690, Asp-765, and Asp-766 together coordinate Mg(2+). The RT 'primer grip' stretch occupies residues 807–815 (FLWMGYELH). The short motif at 978-994 (WEAWWMEYWQATWIPEW) is the Tryptophan repeat motif element. The RNase H type-1 domain maps to 1014-1137 (IAGAETFYVD…VDKLVSSGIR (124 aa)). Mg(2+) contacts are provided by Asp-1023, Glu-1058, Asp-1078, and Asp-1129. The Integrase-type zinc-finger motif lies at 1143-1184 (DGIDKAQEDHEKYHCNWRAMASDFNLPPVVAKEIVASCNKCQ). Zn(2+) is bound by residues His-1152, His-1156, Cys-1180, and Cys-1183. The region spanning 1194–1344 (VDCSPGIWQL…SAGERIIDII (151 aa)) is the Integrase catalytic domain. Mg(2+) is bound by residues Asp-1204, Asp-1256, and Glu-1292. Positions 1363–1410 (FRVYYRDSRDPIWKGPAKLLWKGEGAVVIQDNSDIKVVPRRKAKIIRD) form a DNA-binding region, integrase-type.

As to quaternary structure, homotrimer; further assembles as hexamers of trimers. Interacts with gp41 (via C-terminus). Interacts with host CALM1; this interaction induces a conformational change in the Matrix protein, triggering exposure of the myristate group. Interacts with host AP3D1; this interaction allows the polyprotein trafficking to multivesicular bodies during virus assembly. Part of the pre-integration complex (PIC) which is composed of viral genome, matrix protein, Vpr and integrase. In terms of assembly, homodimer; the homodimer further multimerizes as homohexamers or homopentamers. Interacts with human PPIA/CYPA; This interaction stabilizes the capsid. Interacts with human NUP153. Interacts with host PDZD8; this interaction stabilizes the capsid. Interacts with monkey TRIM5; this interaction destabilizes the capsid. Homodimer, whose active site consists of two apposed aspartic acid residues. As to quaternary structure, heterodimer of p66 RT and p51 RT (RT p66/p51). Heterodimerization of RT is essential for DNA polymerase activity. The overall folding of the subdomains is similar in p66 RT and p51 RT but the spatial arrangements of the subdomains are dramatically different. In terms of assembly, homotetramer; may further associate as a homohexadecamer. Part of the pre-integration complex (PIC) which is composed of viral genome, matrix protein, Vpr and integrase. Interacts with human SMARCB1/INI1 and human PSIP1/LEDGF isoform 1. Interacts with human KPNA3; this interaction might play a role in nuclear import of the pre-integration complex. Interacts with human NUP153; this interaction might play a role in nuclear import of the pre-integration complex. Mg(2+) serves as cofactor. In terms of processing, specific enzymatic cleavages by the viral protease yield mature proteins. The protease is released by autocatalytic cleavage. The polyprotein is cleaved during and after budding, this process is termed maturation. Proteolytic cleavage of p66 RT removes the RNase H domain to yield the p51 RT subunit. Nucleocapsid protein p7 might be further cleaved after virus entry. Tyrosine phosphorylated presumably in the virion by a host kinase. Phosphorylation is apparently not a major regulator of membrane association. Post-translationally, phosphorylated possibly by host MAPK1; this phosphorylation is necessary for Pin1-mediated virion uncoating. In terms of processing, methylated by host PRMT6, impairing its function by reducing RNA annealing and the initiation of reverse transcription.

It is found in the host cell membrane. It localises to the host endosome. The protein localises to the host multivesicular body. The protein resides in the virion membrane. Its subcellular location is the host nucleus. It is found in the host cytoplasm. It localises to the virion. It carries out the reaction Specific for a P1 residue that is hydrophobic, and P1' variable, but often Pro.. The enzyme catalyses Endohydrolysis of RNA in RNA/DNA hybrids. Three different cleavage modes: 1. sequence-specific internal cleavage of RNA. Human immunodeficiency virus type 1 and Moloney murine leukemia virus enzymes prefer to cleave the RNA strand one nucleotide away from the RNA-DNA junction. 2. RNA 5'-end directed cleavage 13-19 nucleotides from the RNA end. 3. DNA 3'-end directed cleavage 15-20 nucleotides away from the primer terminus.. The catalysed reaction is 3'-end directed exonucleolytic cleavage of viral RNA-DNA hybrid.. It catalyses the reaction DNA(n) + a 2'-deoxyribonucleoside 5'-triphosphate = DNA(n+1) + diphosphate. With respect to regulation, protease: The viral protease is inhibited by many synthetic protease inhibitors (PIs), such as amprenavir, atazanavir, indinavir, loprinavir, nelfinavir, ritonavir and saquinavir. Use of protease inhibitors in tritherapy regimens permit more ambitious therapeutic strategies. Reverse transcriptase/ribonuclease H: RT can be inhibited either by nucleoside RT inhibitors (NRTIs) or by non nucleoside RT inhibitors (NNRTIs). NRTIs act as chain terminators, whereas NNRTIs inhibit DNA polymerization by binding a small hydrophobic pocket near the RT active site and inducing an allosteric change in this region. Classical NRTIs are abacavir, adefovir (PMEA), didanosine (ddI), lamivudine (3TC), stavudine (d4T), tenofovir (PMPA), zalcitabine (ddC), and zidovudine (AZT). Classical NNRTIs are atevirdine (BHAP U-87201E), delavirdine, efavirenz (DMP-266), emivirine (I-EBU), and nevirapine (BI-RG-587). The tritherapies used as a basic effective treatment of AIDS associate two NRTIs and one NNRTI. Mediates, with Gag polyprotein, the essential events in virion assembly, including binding the plasma membrane, making the protein-protein interactions necessary to create spherical particles, recruiting the viral Env proteins, and packaging the genomic RNA via direct interactions with the RNA packaging sequence (Psi). Gag-Pol polyprotein may regulate its own translation, by the binding genomic RNA in the 5'-UTR. At low concentration, the polyprotein would promote translation, whereas at high concentration, the polyprotein would encapsidate genomic RNA and then shut off translation. Functionally, targets the polyprotein to the plasma membrane via a multipartite membrane-binding signal, that includes its myristoylated N-terminus. Matrix protein is part of the pre-integration complex. Implicated in the release from host cell mediated by Vpu. Binds to RNA. In terms of biological role, forms the conical core that encapsulates the genomic RNA-nucleocapsid complex in the virion. Most core are conical, with only 7% tubular. The core is constituted by capsid protein hexamer subunits. The core is disassembled soon after virion entry. Host restriction factors such as TRIM5-alpha or TRIMCyp bind retroviral capsids and cause premature capsid disassembly, leading to blocks in reverse transcription. Capsid restriction by TRIM5 is one of the factors which restricts HIV-1 to the human species. Host PIN1 apparently facilitates the virion uncoating. On the other hand, interactions with PDZD8 or CYPA stabilize the capsid. Its function is as follows. Encapsulates and protects viral dimeric unspliced genomic RNA (gRNA). Binds these RNAs through its zinc fingers. Acts as a nucleic acid chaperone which is involved in rearangement of nucleic acid secondary structure during gRNA retrotranscription. Also facilitates template switch leading to recombination. As part of the polyprotein, participates in gRNA dimerization, packaging, tRNA incorporation and virion assembly. Aspartyl protease that mediates proteolytic cleavages of Gag and Gag-Pol polyproteins during or shortly after the release of the virion from the plasma membrane. Cleavages take place as an ordered, step-wise cascade to yield mature proteins. This process is called maturation. Displays maximal activity during the budding process just prior to particle release from the cell. Also cleaves Nef and Vif, probably concomitantly with viral structural proteins on maturation of virus particles. Hydrolyzes host EIF4GI and PABP1 in order to shut off the capped cellular mRNA translation. The resulting inhibition of cellular protein synthesis serves to ensure maximal viral gene expression and to evade host immune response. Also mediates cleavage of host YTHDF3. Mediates cleavage of host CARD8, thereby activating the CARD8 inflammasome, leading to the clearance of latent HIV-1 in patient CD4(+) T-cells after viral reactivation; in contrast, HIV-1 can evade CARD8-sensing when its protease remains inactive in infected cells prior to viral budding. Functionally, multifunctional enzyme that converts the viral RNA genome into dsDNA in the cytoplasm, shortly after virus entry into the cell. This enzyme displays a DNA polymerase activity that can copy either DNA or RNA templates, and a ribonuclease H (RNase H) activity that cleaves the RNA strand of RNA-DNA heteroduplexes in a partially processive 3' to 5' endonucleasic mode. Conversion of viral genomic RNA into dsDNA requires many steps. A tRNA(3)-Lys binds to the primer-binding site (PBS) situated at the 5'-end of the viral RNA. RT uses the 3' end of the tRNA primer to perform a short round of RNA-dependent minus-strand DNA synthesis. The reading proceeds through the U5 region and ends after the repeated (R) region which is present at both ends of viral RNA. The portion of the RNA-DNA heteroduplex is digested by the RNase H, resulting in a ssDNA product attached to the tRNA primer. This ssDNA/tRNA hybridizes with the identical R region situated at the 3' end of viral RNA. This template exchange, known as minus-strand DNA strong stop transfer, can be either intra- or intermolecular. RT uses the 3' end of this newly synthesized short ssDNA to perform the RNA-dependent minus-strand DNA synthesis of the whole template. RNase H digests the RNA template except for two polypurine tracts (PPTs) situated at the 5'-end and near the center of the genome. It is not clear if both polymerase and RNase H activities are simultaneous. RNase H probably can proceed both in a polymerase-dependent (RNA cut into small fragments by the same RT performing DNA synthesis) and a polymerase-independent mode (cleavage of remaining RNA fragments by free RTs). Secondly, RT performs DNA-directed plus-strand DNA synthesis using the PPTs that have not been removed by RNase H as primers. PPTs and tRNA primers are then removed by RNase H. The 3' and 5' ssDNA PBS regions hybridize to form a circular dsDNA intermediate. Strand displacement synthesis by RT to the PBS and PPT ends produces a blunt ended, linear dsDNA copy of the viral genome that includes long terminal repeats (LTRs) at both ends. In terms of biological role, catalyzes viral DNA integration into the host chromosome, by performing a series of DNA cutting and joining reactions. This enzyme activity takes place after virion entry into a cell and reverse transcription of the RNA genome in dsDNA. The first step in the integration process is 3' processing. This step requires a complex comprising the viral genome, matrix protein, Vpr and integrase. This complex is called the pre-integration complex (PIC). The integrase protein removes 2 nucleotides from each 3' end of the viral DNA, leaving recessed CA OH's at the 3' ends. In the second step, the PIC enters cell nucleus. This process is mediated through integrase and Vpr proteins, and allows the virus to infect a non dividing cell. This ability to enter the nucleus is specific of lentiviruses, other retroviruses cannot and rely on cell division to access cell chromosomes. In the third step, termed strand transfer, the integrase protein joins the previously processed 3' ends to the 5' ends of strands of target cellular DNA at the site of integration. The 5'-ends are produced by integrase-catalyzed staggered cuts, 5 bp apart. A Y-shaped, gapped, recombination intermediate results, with the 5'-ends of the viral DNA strands and the 3' ends of target DNA strands remaining unjoined, flanking a gap of 5 bp. The last step is viral DNA integration into host chromosome. This involves host DNA repair synthesis in which the 5 bp gaps between the unjoined strands are filled in and then ligated. Since this process occurs at both cuts flanking the HIV genome, a 5 bp duplication of host DNA is produced at the ends of HIV-1 integration. Alternatively, Integrase may catalyze the excision of viral DNA just after strand transfer, this is termed disintegration. In Human immunodeficiency virus type 1 group M subtype A (isolate U455) (HIV-1), this protein is Gag-Pol polyprotein (gag-pol).